The primary structure comprises 705 residues: Elongation factor G (705 aa).

Residues 8–290 (AYYRNIGISA…AVIEYLPAPT (283 aa)) form the tr-type G domain. GTP-binding positions include 17 to 24 (AHIDAGKT), 88 to 92 (DTPGH), and 142 to 145 (NKMD).

This sequence belongs to the TRAFAC class translation factor GTPase superfamily. Classic translation factor GTPase family. EF-G/EF-2 subfamily.

Its subcellular location is the cytoplasm. Functionally, catalyzes the GTP-dependent ribosomal translocation step during translation elongation. During this step, the ribosome changes from the pre-translocational (PRE) to the post-translocational (POST) state as the newly formed A-site-bound peptidyl-tRNA and P-site-bound deacylated tRNA move to the P and E sites, respectively. Catalyzes the coordinated movement of the two tRNA molecules, the mRNA and conformational changes in the ribosome. The chain is Elongation factor G from Baumannia cicadellinicola subsp. Homalodisca coagulata.